A 712-amino-acid chain; its full sequence is Rap1 GTPase-activating protein 2 (712 aa).

The disordered stretch occupies residues 1 to 33; it reads MLAGLKVKKQELANSSDVTLPDRPLSPPLTAPP. A Phosphoserine modification is found at Ser26. Thr30 bears the Phosphothreonine mark. The Rap-GAP domain maps to 229–445; that stretch reads IVSYDEHDVN…RTRAALLDNL (217 aa). A phosphoserine mark is found at Ser488, Ser495, Ser525, Ser539, Ser545, Ser593, and Ser594. The segment at 529–712 is disordered; sequence AAATAKNQSR…LSHASSSAGH (184 aa). Residues 566 to 594 show a composition bias toward polar residues; it reads DSASSTPKTPDGGHSSQEIKSETSSNPSS. Residues 599–612 show a composition bias toward basic and acidic residues; the sequence is PNKEKPFIKLKENG. Low complexity predominate over residues 617-629; the sequence is SRSSSSTSSFSST. A compositionally biased stretch (polar residues) spans 641–652; that stretch reads SGSSQPSTTSPF. A compositionally biased stretch (low complexity) spans 660–669; sequence SPSPSSESPS. Polar residues predominate over residues 681 to 694; it reads RSPTDAKSRNSPRS.

Its subcellular location is the cytoplasm. GTPase activator for the nuclear Ras-related regulatory protein RAP-1A (KREV-1), converting it to the putatively inactive GDP-bound state. The polypeptide is Rap1 GTPase-activating protein 2 (Rap1gap2) (Mus musculus (Mouse)).